The chain runs to 103 residues: UPF0134 protein MPN_484 (103 aa).

Belongs to the UPF0134 family.

The sequence is that of UPF0134 protein MPN_484 from Mycoplasma pneumoniae (strain ATCC 29342 / M129 / Subtype 1) (Mycoplasmoides pneumoniae).